A 596-amino-acid polypeptide reads, in one-letter code: Ferredoxin--nitrite reductase, chloroplastic (596 aa).

Residues 1-28 (MASSASLQRFLPPYPHAAASRCRPPGVR) constitute a chloroplast transit peptide. The segment at 1–56 (MASSASLQRFLPPYPHAAASRCRPPGVRARPVQSSTVSAPSSSTPAADEAVSAERL) is disordered. The segment covering 31–47 (PVQSSTVSAPSSSTPAA) has biased composition (low complexity). Residues cysteine 474, cysteine 480, cysteine 515, and cysteine 519 each contribute to the [4Fe-4S] cluster site. Cysteine 519 contacts siroheme.

It belongs to the nitrite and sulfite reductase 4Fe-4S domain family. In terms of assembly, monomer. Siroheme serves as cofactor. [4Fe-4S] cluster is required as a cofactor.

The protein localises to the plastid. It is found in the chloroplast. The enzyme catalyses 6 oxidized [2Fe-2S]-[ferredoxin] + NH4(+) + 2 H2O = nitrite + 6 reduced [2Fe-2S]-[ferredoxin] + 8 H(+). It participates in nitrogen metabolism; nitrate reduction (assimilation). Catalyzes the six-electron reduction of nitrite to ammonium. The polypeptide is Ferredoxin--nitrite reductase, chloroplastic (Oryza sativa subsp. japonica (Rice)).